A 345-amino-acid chain; its full sequence is Nuclear distribution protein nudE-like 1-A (345 aa).

A coiled-coil region spans residues 19-190; that stretch reads WRELSKRLKQ…LAVRERQTDG (172 aa). Basic and acidic residues predominate over residues 182–192; the sequence is AVRERQTDGTR. Disordered regions lie at residues 182–206 and 326–345; these read AVRERQTDGTRKSAPSSPTLDCDKT and PPGVLGSRPPSPPGMLPLSV. The span at 334–345 shows a compositional bias: pro residues; that stretch reads PPSPPGMLPLSV.

This sequence belongs to the nudE family. In terms of processing, phosphorylated in mitosis.

It is found in the cytoplasm. The protein resides in the cytoskeleton. Its subcellular location is the microtubule organizing center. It localises to the centrosome. The protein localises to the spindle. Its function is as follows. Required for organization of the cellular microtubule array and microtubule anchoring at the centrosome. Positively regulates the activity of the minus-end directed microtubule motor protein dynein. May enhance dynein-mediated microtubule sliding by targeting dynein to the microtubule plus end. Positively regulates lysosome peripheral distribution and ruffled border formation in osteoclasts. The chain is Nuclear distribution protein nudE-like 1-A (ndel1-a) from Xenopus laevis (African clawed frog).